We begin with the raw amino-acid sequence, 689 residues long: MAPWPELGDAQPNPDKYLEGAAGQQPTAPDKSKETNKNNTEAPVTKIELLPTYSTATLIDEPTEVDDPWNIPTLQDSGIKWSERDTKGKILCVFQGIGRLILLLGFLYFFVCSLDILSSAFQLVGGKMAGQFFSNSSIMSNPLLGLVIGVLVTVLVQSSSTSTSIVVSMVSSSLLTVRAAIPIIMGANIGTSITNTIVALMQVGDRSEFRRAFAGATVHDFFNWLSVLVLLPVEVATHYLEIITQLIVDSFHSKNGEDAPDLLKVITKPFTKLIVQLDKKIISQIAMNDEKAKNKSLVKIWCKTFTNKTQVNVTVPSTANCTSPSLCWTDGIQTWTMKNVTYKENIAKCQHIFVNFHLPDLAVGTILLILSLLVLCGCLIMIVKILGSVLKGQVATVIKKTINTDFPFPFAWLTGYLAILVGAGMTFIVQSSSVFTSALTPLIGIGVITIERAYPLTLGSNIGTTTTAILAALASPGNALRSSLQIALCHFFFNISGILLWYPIPFTRLPIRMAKGLGNISAKYRWFAVFYLIIFFFLIPLTVFGLSLAGWRVLVGVGVPVVFIIILVLCLRLLQSRCPRVLPKKLQNWNFLPLWMRSLKPWDAVFSKFTGCFQMRCCCCCRVCCRACCLLCGCPKCCRCSKCCEDLEEAHEGQDVPVKAPDTFDNITISREAQGEVPASDSKTECTAL.

Residues 1–41 (MAPWPELGDAQPNPDKYLEGAAGQQPTAPDKSKETNKNNTE) form a disordered region. Over 1 to 100 (MAPWPELGDA…LCVFQGIGRL (100 aa)) the chain is Cytoplasmic. A helical membrane pass occupies residues 101–121 (ILLLGFLYFFVCSLDILSSAF). The Extracellular portion of the chain corresponds to 122–135 (QLVGGKMAGQFFSN). A helical transmembrane segment spans residues 136 to 156 (SSIMSNPLLGLVIGVLVTVLV). Residues 157-212 (QSSSTSTSIVVSMVSSSLLTVRAAIPIIMGANIGTSITNTIVALMQVGDRSEFRRA) lie on the Cytoplasmic side of the membrane. A helical membrane pass occupies residues 213 to 233 (FAGATVHDFFNWLSVLVLLPV). Over 234-362 (EVATHYLEII…FVNFHLPDLA (129 aa)) the chain is Extracellular. N-linked (GlcNAc...) asparagine glycans are attached at residues asparagine 294, asparagine 307, and asparagine 320. A disulfide bond links cysteine 302 and cysteine 349. A helical transmembrane segment spans residues 363–383 (VGTILLILSLLVLCGCLIMIV). Over 384–407 (KILGSVLKGQVATVIKKTINTDFP) the chain is Cytoplasmic. Residues 408 to 428 (FPFAWLTGYLAILVGAGMTFI) traverse the membrane as a helical segment. The Extracellular portion of the chain corresponds to 429–485 (VQSSSVFTSALTPLIGIGVITIERAYPLTLGSNIGTTTTAILAALASPGNALRSSLQ). A helical transmembrane segment spans residues 486-506 (IALCHFFFNISGILLWYPIPF). Over 507 to 525 (TRLPIRMAKGLGNISAKYR) the chain is Cytoplasmic. A helical membrane pass occupies residues 526–546 (WFAVFYLIIFFFLIPLTVFGL). The Extracellular segment spans residues 547-552 (SLAGWR). A helical membrane pass occupies residues 553 to 573 (VLVGVGVPVVFIIILVLCLRL). Residues 574–687 (LQSRCPRVLP…PASDSKTECT (114 aa)) are Cytoplasmic-facing.

This sequence belongs to the SLC34A transporter family.

It localises to the apical cell membrane. It catalyses the reaction 3 Na(+)(out) + phosphate(out) = 3 Na(+)(in) + phosphate(in). Functionally, involved in actively transporting phosphate into cells via Na(+) cotransport. This is Sodium-dependent phosphate transport protein 2B (SLC34A2) from Pongo abelii (Sumatran orangutan).